The chain runs to 617 residues: UvrABC system protein C (617 aa).

The GIY-YIG domain occupies 12–91 (EKPGVYLMKD…IKKYKPKYNV (80 aa)). Positions 203–238 (EWLVEKLKEEMQKAADELRFEEAARLRDQIFAIEKI) constitute a UVR domain.

Belongs to the UvrC family. Interacts with UvrB in an incision complex.

Its subcellular location is the cytoplasm. The UvrABC repair system catalyzes the recognition and processing of DNA lesions. UvrC both incises the 5' and 3' sides of the lesion. The N-terminal half is responsible for the 3' incision and the C-terminal half is responsible for the 5' incision. The polypeptide is UvrABC system protein C (Caldanaerobacter subterraneus subsp. tengcongensis (strain DSM 15242 / JCM 11007 / NBRC 100824 / MB4) (Thermoanaerobacter tengcongensis)).